We begin with the raw amino-acid sequence, 304 residues long: L-xylo-3-hexulose reductase (304 aa).

3 residues coordinate NADP(+): I19, D68, and N107. Catalysis depends on proton donor residues S163 and S164. 3 residues coordinate NADP(+): Y177, K181, and A209. The active-site Proton acceptor is the Y177. The active-site Lowers pKa of active site Tyr is the K181.

Belongs to the short-chain dehydrogenases/reductases (SDR) family.

It carries out the reaction D-sorbitol + NADP(+) = L-xylo-3-hexulose + NADPH + H(+). It participates in carbohydrate degradation. Functionally, L-xylulose reductase involved in the catabolism of D-galactose through an oxidoreductive pathway. Catalyzes the NADPH-dependent reduction of L-xylo-3-hexulose. Is also active with D-ribulose and L-xylulose, and to a lesser extent with D-xylulose, D-fructose and L- and D-sorbose. In the reverse reaction, shows activity with D-sorbitol and D-mannitol, low activity with xylitol, but no activity with galactitol, ribitol, and L- and D-arabitol. This chain is L-xylo-3-hexulose reductase, found in Hypocrea jecorina (strain QM6a) (Trichoderma reesei).